The sequence spans 395 residues: Guanine nucleotide-binding protein subunit beta-5b (395 aa).

7 WD repeats span residues 103-142 (GHGN…KEHA), 145-184 (MPCT…NENL), 193-234 (MHTN…QSFH), 235-276 (GHSA…NVQS), 279-318 (THDS…EVAI), 320-362 (SKDS…RVAI), and 365-395 (GHEN…RIWA).

This sequence belongs to the WD repeat G protein beta family. As to quaternary structure, may interact with RGS9; this interaction stabilizes both proteins and increases RGS9 GTPase-activating protein (GAP) activity, hence accelerating the deactivation of D(2) dopamine receptor-mediated signaling.

The protein localises to the membrane. Functionally, enhances GTPase-activating protein (GAP) activity of regulator of G protein signaling (RGS) proteins, such as RGS7 and RGS9, hence involved in the termination of the signaling initiated by the G protein coupled receptors (GPCRs) by accelerating the GTP hydrolysis on the G-alpha subunits, thereby promoting their inactivation. Increases RGS7 GTPase-activating protein (GAP) activity, thereby regulating mood and cognition. Increases RGS9 GTPase-activating protein (GAP) activity, hence contributes to the deactivation of G protein signaling initiated by D(2) dopamine receptors. Along with gnb5a, plays an important role in neuronal signaling, including in the parasympathetic, but not sympathetic, control of heart rate. The sequence is that of Guanine nucleotide-binding protein subunit beta-5b from Danio rerio (Zebrafish).